We begin with the raw amino-acid sequence, 252 residues long: Hydroxyacylglutathione hydrolase (252 aa).

Positions 54, 56, 58, 59, 113, 132, and 170 each coordinate Zn(2+).

It belongs to the metallo-beta-lactamase superfamily. Glyoxalase II family. In terms of assembly, monomer. Zn(2+) serves as cofactor.

The catalysed reaction is an S-(2-hydroxyacyl)glutathione + H2O = a 2-hydroxy carboxylate + glutathione + H(+). It functions in the pathway secondary metabolite metabolism; methylglyoxal degradation; (R)-lactate from methylglyoxal: step 2/2. In terms of biological role, thiolesterase that catalyzes the hydrolysis of S-D-lactoyl-glutathione to form glutathione and D-lactic acid. The chain is Hydroxyacylglutathione hydrolase from Synechococcus sp. (strain JA-3-3Ab) (Cyanobacteria bacterium Yellowstone A-Prime).